A 309-amino-acid chain; its full sequence is Partitioning defective protein 6 (309 aa).

One can recognise a PB1 domain in the interval 14-96 (TLQVKSKFDS…PLLRLLIQRR (83 aa)). Positions 132-149 (ISNPEDFRQVSAIIDVDI) constitute a Pseudo-CRIB domain. Positions 156 to 249 (RVRLCKHGQE…NLIITVKPAN (94 aa)) constitute a PDZ domain. The segment covering 249–270 (NQRNTLSRGPSQQGTPNASEMS) has biased composition (polar residues). The disordered stretch occupies residues 249-309 (NQRNTLSRGP…DANDSDSGED (61 aa)).

Belongs to the PAR6 family. Interacts with par-3, required for its peripheral localization, and with cdc-42, required for the activation of a par-3/par-6/pkc-3 complex. As to expression, colocalized with par-3 at all stages in early embryos, at the anterior cortex of the embryo. Patchy expression observed at the periphery after completion of meiosis I and in meiosis II, which on completion of metaphase II, is restricted to the anterior 85% of embryo length; this decreases to 55% in embryos between prophase and telophase of the first mitosis. During the first cleavage, expression is detected in the advancing furrow. Along with pkc-3, is unable to associate with the apical cortex of cells that lack par-3. Transiently coexpressed and colocalized with par-3 and pkc-3, asymmetrically in the developing somatic gonad, including the spermathecal precursor cells of L4 larvae.

It is found in the cytoplasm. It localises to the cell membrane. Its subcellular location is the cell junction. The protein localises to the tight junction. Functionally, necessary for apicobasal and anterior-posterior asymmetries associated with cell adhesion and gastrulation during the first few cell cycles of embryogenesis. Required for localizing/ maintaining par-3 at the cell periphery. Regulates mes-1 expression and/or localization pattern during early embryogenesis. Acts together with par-3 and pkc-3 in maintaining epithelial cell polarity in the distal spermatheca. Plays a role in endosome and Golgi body positioning. This chain is Partitioning defective protein 6, found in Caenorhabditis elegans.